The sequence spans 222 residues: Glutathione S-transferase (222 aa).

The GST N-terminal domain occupies 3–83 (GKPKLHYTRG…YIAGKYNLYG (81 aa)). Glutathione-binding positions include Tyr-9, Arg-45, 54–55 (QV), and 67–68 (QS). Residues 85-208 (DLKERAWIDM…QPGSQRKPPL (124 aa)) enclose the GST C-terminal domain.

It belongs to the GST superfamily. Alpha family. In terms of assembly, homodimer.

It localises to the cytoplasm. It carries out the reaction RX + glutathione = an S-substituted glutathione + a halide anion + H(+). Its function is as follows. Conjugation of reduced glutathione to a wide number of exogenous and endogenous hydrophobic electrophiles. In Gallus gallus (Chicken), this protein is Glutathione S-transferase.